Here is a 677-residue protein sequence, read N- to C-terminus: Glutamine--fructose-6-phosphate aminotransferase [isomerizing] 1 (677 aa).

Cys2 functions as the Nucleophile in the catalytic mechanism. Residues 2–269 (CGIFAYLNFH…DGEVVNLKDG (268 aa)) form the Glutamine amidotransferase type-2 domain. SIS domains follow at residues 353–492 (HLKT…DTIS) and 524–667 (LAQL…VDQP). Residues 370–371 (TS), 415–417 (SQS), Thr420, and His571 each bind substrate.

In terms of assembly, homotetramer, may also exist as homodimers. Highly expressed in flowers specifically in mature anthers, mature pollen grains and pollen tubes. Barely observed in roots, leaves and stems.

The enzyme catalyses D-fructose 6-phosphate + L-glutamine = D-glucosamine 6-phosphate + L-glutamate. Its pathway is nucleotide-sugar biosynthesis; UDP-N-acetyl-alpha-D-glucosamine biosynthesis; alpha-D-glucosamine 6-phosphate from D-fructose 6-phosphate: step 1/1. Controls the flux of glucose into the hexosamine biosynthetic pathway (HBP) leading to glucosamine (GlcN) content homeostasis. Involved in regulating the availability of precursors for N- and O-linked glycosylation of proteins. Required during pollen maturation and pollen tube formation by triggering polar deposition of pectin and callose in the pollen cell wall. Promotes tolerance to tunicamycin (Tm), an inhibitor of proteins N-glycosylation in endoplasmic reticulum (ER). This chain is Glutamine--fructose-6-phosphate aminotransferase [isomerizing] 1, found in Arabidopsis thaliana (Mouse-ear cress).